The chain runs to 140 residues: Hemoglobin subunit beta (140 aa).

The Globin domain occupies 1 to 140 (GSDLVSGFWG…VGDALAKAYH (140 aa)). His57 and His86 together coordinate heme b.

It belongs to the globin family. In terms of assembly, heterotetramer of two alpha chains and two beta chains. As to expression, red blood cells.

Functionally, involved in oxygen transport from the lung to the various peripheral tissues. The polypeptide is Hemoglobin subunit beta (HBB) (Pelophylax lessonae (Pool frog)).